The sequence spans 412 residues: Argininosuccinate synthase (412 aa).

Residues 16–24 (AYSGGLDTS) and Ala-44 each bind ATP. L-citrulline contacts are provided by Tyr-96 and Ser-101. An ATP-binding site is contributed by Gly-126. Thr-128, Asn-132, and Asp-133 together coordinate L-aspartate. Asn-132 is an L-citrulline binding site. Arg-136, Ser-185, Ser-194, Glu-270, and Tyr-282 together coordinate L-citrulline.

The protein belongs to the argininosuccinate synthase family. Type 1 subfamily. Homotetramer.

It localises to the cytoplasm. It catalyses the reaction L-citrulline + L-aspartate + ATP = 2-(N(omega)-L-arginino)succinate + AMP + diphosphate + H(+). The protein operates within amino-acid biosynthesis; L-arginine biosynthesis; L-arginine from L-ornithine and carbamoyl phosphate: step 2/3. The chain is Argininosuccinate synthase from Shewanella baltica (strain OS185).